Here is a 121-residue protein sequence, read N- to C-terminus: Large ribosomal subunit protein uL14c (121 aa).

Belongs to the universal ribosomal protein uL14 family. As to quaternary structure, part of the 50S ribosomal subunit.

The protein resides in the plastid. The protein localises to the chloroplast. Binds to 23S rRNA. This Guillardia theta (Cryptophyte) protein is Large ribosomal subunit protein uL14c.